The chain runs to 993 residues: Signal peptide, CUB and EGF-like domain-containing protein 3 (993 aa).

An N-terminal signal peptide occupies residues 1–20 (MGSGRVPGLCLLLLLVHARA). Residues 29 to 69 (DVDECVEGTDNCHIDAICQNTPRSYKCICKSGYTGDGKHCK) enclose the EGF-like 1; calcium-binding domain. Intrachain disulfides connect C33/C46, C40/C55, C57/C68, C74/C86, C82/C95, C97/C110, C116/C127, C123/C136, C161/C172, C168/C182, C184/C197, C201/C212, C208/C221, C223/C236, C240/C251, C247/C260, C262/C275, C281/C292, C288/C301, C303/C316, C322/C332, C328/C341, C343/C355, C361/C372, C368/C381, and C383/C397. Positions 70–111 (DVDECEREDNAGCVHDCVNIPGNYRCTCYDGFHLAHDGHNCL) constitute an EGF-like 2; calcium-binding domain. The 37-residue stretch at 112–148 (DVDECAEGNGGCQQSCVNMMGSYECHCRDGFFLSDNQ) folds into the EGF-like 3; calcium-binding domain. EGF-like domains are found at residues 157-198 (EGMN…RDCK), 199-237 (LTCN…KTCI), and 238-276 (ETCA…KTCK). One can recognise an EGF-like 7; calcium-binding domain in the interval 277–317 (DIDECRLNNGGCDHICRNTVGSFECSCKKGYKLLINERSCQ). Positions 318–356 (DIDECSFDRTCDHMCVNTPGSFQCLCHRGYLLYGVTHCG) constitute an EGF-like 8; calcium-binding domain. Residues 357–398 (DVDECSINKGGCRFGCINTPGSYQCTCPAGQGRLHWNGKDCT) form the EGF-like 9; calcium-binding domain. Residues N417, N464, N685, N756, and N785 are each glycosylated (N-linked (GlcNAc...) asparagine). Cystine bridges form between C804–C830 and C857–C878. Residues 804–916 (CGGELGEFTG…RGFQIPYVTY (113 aa)) enclose the CUB domain.

As to quaternary structure, forms homooligomers. Forms heterooligomers with SCUBE1 and SCUBE2. Interacts with TGFBR2 through the CUB domain; this interaction does not affect TGFB1-binding to TGFBR2. Interacts with BMP2, BMP4 and BMP7; the interaction is mediated by the CUB domain. Interacts with BMPR1A, BMPR1B and BMPR2; the interaction with BMPR1A and BMPR1B is BMP2- and BMP4-dependent. N-glycosylated. Post-translationally, proteolytic cleavage produces a CUB-containing C-terminal fragment that retains the ability to bind to TGFBR2. This reaction is catalyzed in vitro by MMP2 and, to a lesser extent, by MMP9. As to expression, highly expressed in femur and humerus with little or no expression in non-bone tissues.

It localises to the secreted. The protein resides in the cell surface. Is a positive regulator of the BMP signaling pathway, required for proper chondrogenesis, osteogenesis and skeletal development. It acts as a coreceptor for BMP ligands, particularly BMP2 and BMP4, facilitating their interactions with BMP type I receptors. It is required for ligand-induced recruitment of BMP receptors to lipid rafts. Binds to TGFBR2 and activates TGFB signaling. This is Signal peptide, CUB and EGF-like domain-containing protein 3 from Mus musculus (Mouse).